The chain runs to 360 residues: Phospho-N-acetylmuramoyl-pentapeptide-transferase (360 aa).

The next 10 helical transmembrane spans lie at 26–46, 74–94, 97–117, 134–154, 168–188, 199–219, 236–256, 263–283, 288–308, and 338–358; these read AILGLLTALVFSLWFGPKLIE, MGGLLILAAIFISVLLWGDLG, YVWVMLFVLGSFGLIGFIDDY, YILQSLAALLIAFFLYATAAN, VMPQLGAVFIVLAYFTIVGAS, GLAIMPTVMVAAAFALIAYLS, SGELVIVCTAIVGAGLGFLWF, VFMGDVGSLSLGAALGTIAVL, ILLVIMGGVFVMETLSVILQV, and VIVRFWIISIFLVLLGLATLK.

Belongs to the glycosyltransferase 4 family. MraY subfamily. Requires Mg(2+) as cofactor.

The protein resides in the cell inner membrane. It catalyses the reaction UDP-N-acetyl-alpha-D-muramoyl-L-alanyl-gamma-D-glutamyl-meso-2,6-diaminopimeloyl-D-alanyl-D-alanine + di-trans,octa-cis-undecaprenyl phosphate = di-trans,octa-cis-undecaprenyl diphospho-N-acetyl-alpha-D-muramoyl-L-alanyl-D-glutamyl-meso-2,6-diaminopimeloyl-D-alanyl-D-alanine + UMP. It functions in the pathway cell wall biogenesis; peptidoglycan biosynthesis. Catalyzes the initial step of the lipid cycle reactions in the biosynthesis of the cell wall peptidoglycan: transfers peptidoglycan precursor phospho-MurNAc-pentapeptide from UDP-MurNAc-pentapeptide onto the lipid carrier undecaprenyl phosphate, yielding undecaprenyl-pyrophosphoryl-MurNAc-pentapeptide, known as lipid I. The chain is Phospho-N-acetylmuramoyl-pentapeptide-transferase from Shewanella baltica (strain OS185).